Reading from the N-terminus, the 465-residue chain is Probable inactive receptor-like kinase BSK12 (465 aa).

Positions 1 to 12 are enriched in polar residues; the sequence is MGCCYSLSSTVD. The interval 1–34 is disordered; sequence MGCCYSLSSTVDPVQDHTTDASSEPRNGGGEDPP. A lipid anchor (N-myristoyl glycine) is attached at glycine 2. S-palmitoyl cysteine attachment occurs at residues cysteine 3 and cysteine 4. Residues 50–291 form the Protein kinase domain; it reads FSPENIVSDQ…KEIVATLETL (242 aa). ATP-binding positions include 56 to 64 and lysine 78; that span reads VSDQTSDVV.

Belongs to the protein kinase superfamily. Ser/Thr protein kinase family. In terms of assembly, interacts with YDA. In terms of processing, diacylation-mediated membrane association is essential for BSK12 function. Expressed at the mRNA level in the sperm cells in mature pollen, but the protein is only detectable in the zygote and the micropylar endosperm upon fertilization.

It localises to the cell membrane. Functionally, probable inactive protein kinase that activates the YODA MAP kinase cascade, which regulates the asymmetric first division and embryo polarity, by promoting the elongation of the zygote and the development of its basal daughter cell into the extra-embryonic suspensor. Acts as an adapter at the plasma membrane, possibly by recruiting and binding an activator. In Arabidopsis thaliana (Mouse-ear cress), this protein is Probable inactive receptor-like kinase BSK12.